We begin with the raw amino-acid sequence, 560 residues long: Hypermethylated in cancer 2 protein (560 aa).

Residues 24-87 (CDVIIVVENA…IYTGKLLSSD (64 aa)) enclose the BTB domain. Disordered stretches follow at residues 122–163 (RSLL…KTKR) and 183–367 (HCTT…GGRN). 2 stretches are compositionally biased toward polar residues: residues 126 to 153 (NKPTTPTNGRTSRNQRLSSTPVTPNQMS) and 183 to 203 (HCTTSNSLSPSTSKNGSNGSC). Low complexity predominate over residues 224–242 (EEVSPSSIPQESPQSASES). Over residues 243-259 (TANSASFDENPNTQNLT) the composition is skewed to polar residues. Residues 296–308 (PKSEGKKGEDMER) show a composition bias toward basic and acidic residues. Residues 348–362 (ENGQEQSEESGQSEN) show a composition bias toward low complexity. 5 consecutive C2H2-type zinc fingers follow at residues 387-409 (YVCIPCGKGFPSSEELNAHVETH), 450-472 (FSCSVCNKSYKDPATLRQHEKTH), 478-500 (FPCNICGKMFTQRGTMTRHMRSH), 506-528 (FACEECGMRFTRQYRLTEHMRVH), and 534-556 (YECQLCGGKFTQQRNLISHLRMH).

Belongs to the krueppel C2H2-type zinc-finger protein family. Hic subfamily.

It is found in the nucleus. Transcriptional repressor. The sequence is that of Hypermethylated in cancer 2 protein (hic2) from Danio rerio (Zebrafish).